The following is a 1010-amino-acid chain: Polyhomeotic-like protein 1 (1010 aa).

The segment covering 1–22 has biased composition (low complexity); sequence METESEQNSSSTNGSSSSGASS. Disordered regions lie at residues 1 to 25, 212 to 243, 259 to 312, 444 to 506, 565 to 588, and 646 to 678; these read METE…SRPQ, NQQA…LSQT, GQSL…TGVV, QQQG…SKPP, GAVQ…PGAL, and KRKA…SPKV. The span at 212-228 shows a compositional bias: polar residues; that stretch reads NQQASAQGPQMPGSTQK. The segment covering 279-292 has biased composition (gly residues); that stretch reads MGPGGGGQAPGGLG. Residues 453-463 show a composition bias toward pro residues; the sequence is PQPPQVPPTQQ. The span at 464–480 shows a compositional bias: low complexity; that stretch reads VPPSQSQQQAQTLVVQP. Residues 488–500 show a composition bias toward pro residues; that stretch reads TLPPEPTSKPPIP. The span at 575–587 shows a compositional bias: low complexity; that stretch reads ASSPPSSQAAPGA. The residue at position 651 (Ser651) is a Phosphoserine. A Glycyl lysine isopeptide (Lys-Gly) (interchain with G-Cter in SUMO2) cross-link involves residue Lys769. The disordered stretch occupies residues 772-794; the sequence is QAGLPTGLNESQPSGPLGGDSPS. An FCS-type zinc finger spans residues 797–831; sequence LEKKANLLKCEYCGKYAPAEQFRGSKRFCSMTCAK. Positions 806, 809, 825, and 829 each coordinate Zn(2+). A disordered region spans residues 854 to 928; it reads ASYARVRRRG…LGNTITTPST (75 aa). The residue at position 904 (Ser904) is a Phosphoserine. Thr928 carries the post-translational modification Phosphothreonine. In terms of domain architecture, SAM spans 946–1010; that stretch reads WSVEEVYEFI…CAKINVLKET (65 aa).

In terms of assembly, homodimer. Component of a PRC1-like complex. Interacts with the SAM domain of SCMH1 via its SAM domain in vitro. Interacts with RNF2 and CBX7. Interacts with PHC2. Interacts with BMI1. In terms of tissue distribution, highly expressed in testis with lower levels in most other tissues. Expressed in embryonic stem cells.

The protein resides in the nucleus. Component of a Polycomb group (PcG) multiprotein PRC1-like complex, a complex class required to maintain the transcriptionally repressive state of many genes, including Hox genes, throughout development. PcG PRC1 complex acts via chromatin remodeling and modification of histones; it mediates monoubiquitination of histone H2A 'Lys-119', rendering chromatin heritably changed in its expressibility. Required for proper control of cellular levels of GMNN expression. This Mus musculus (Mouse) protein is Polyhomeotic-like protein 1.